The primary structure comprises 319 residues: MKKKKIGLLVMAYGTPDSLDEVEAYYTHIRHGRKPSEEALQDLIGRYKAIGGISPLAKITKEQAHKLTDSMNNMFTEYEFNCYLGLKHTAPFIEDAVEEMKRDGIEQAISIVLAPHYSTFSIKAYNERAIRLSEEIGGPVIKPIDQWYDEPKFISYWADQIKETFTKIEDKEKAVVIFSAHSLPEKIIAAGDPYVEQLQHTADLIAAAANIQNYTIGWQSAGNTPDPWIGPDVQDLTRDLFEEYRYESFIYCPVGFVAEHLEVLYDNDYECKVVTDELNAAYFRPNMPNAQSTFIDCLATIVSRKMKEIVDKELILNNN.

Fe-coproporphyrin III-binding positions include tyrosine 13, arginine 30, 46-47 (RY), serine 54, and tyrosine 125. Histidine 181 and glutamate 262 together coordinate Fe(2+).

This sequence belongs to the ferrochelatase family.

It is found in the cytoplasm. It catalyses the reaction Fe-coproporphyrin III + 2 H(+) = coproporphyrin III + Fe(2+). The protein operates within porphyrin-containing compound metabolism; protoheme biosynthesis. Functionally, involved in coproporphyrin-dependent heme b biosynthesis. Catalyzes the insertion of ferrous iron into coproporphyrin III to form Fe-coproporphyrin III. This Bacillus anthracis protein is Coproporphyrin III ferrochelatase 2.